A 116-amino-acid chain; its full sequence is Vesicle-associated membrane protein 5 (116 aa).

Residues 1 to 72 lie on the Cytoplasmic side of the membrane; sequence MAGKELERCQ…RWENARCRIY (72 aa). The region spanning 5 to 65 is the v-SNARE coiled-coil homology domain; the sequence is ELERCQRQAD…KTLAQKKRWE (61 aa). 3 positions are modified to phosphoserine: serine 41, serine 48, and serine 49. The helical; Anchor for type IV membrane protein transmembrane segment at 73–93 threads the bilayer; that stretch reads MGLAVGIALLILLIVLLVIFL. The Vesicular portion of the chain corresponds to 94-116; it reads PQSSKGSSAPQVQDAGPASGPGE. The segment at 97-116 is disordered; that stretch reads SKGSSAPQVQDAGPASGPGE.

The protein belongs to the synaptobrevin family.

The protein resides in the cell membrane. It is found in the endomembrane system. It localises to the golgi apparatus. The protein localises to the trans-Golgi network membrane. May participate in trafficking events that are associated with myogenesis, such as myoblast fusion and/or GLUT4 trafficking. In Bos taurus (Bovine), this protein is Vesicle-associated membrane protein 5 (VAMP5).